Consider the following 206-residue polypeptide: 2-phospho-L-lactate guanylyltransferase (206 aa).

It belongs to the CofC family. In terms of assembly, homodimer.

The enzyme catalyses (2S)-2-phospholactate + GTP + H(+) = (2S)-lactyl-2-diphospho-5'-guanosine + diphosphate. It participates in cofactor biosynthesis; coenzyme F420 biosynthesis. Its function is as follows. Guanylyltransferase that catalyzes the activation of (2S)-2-phospholactate (2-PL) as (2S)-lactyl-2-diphospho-5'-guanosine, via the condensation of 2-PL with GTP. It is involved in the biosynthesis of coenzyme F420, a hydride carrier cofactor. The protein is 2-phospho-L-lactate guanylyltransferase of Archaeoglobus fulgidus (strain ATCC 49558 / DSM 4304 / JCM 9628 / NBRC 100126 / VC-16).